Consider the following 341-residue polypeptide: Methionine import ATP-binding protein MetN 1 (341 aa).

Residues 2-241 form the ABC transporter domain; the sequence is IKLNQIVKRY…PQHEVTKRFV (240 aa). An ATP-binding site is contributed by 38–45; that stretch reads GFSGAGKS.

It belongs to the ABC transporter superfamily. Methionine importer (TC 3.A.1.24) family. In terms of assembly, the complex is composed of two ATP-binding proteins (MetN), two transmembrane proteins (MetI) and a solute-binding protein (MetQ).

The protein localises to the cell membrane. It catalyses the reaction L-methionine(out) + ATP + H2O = L-methionine(in) + ADP + phosphate + H(+). The enzyme catalyses D-methionine(out) + ATP + H2O = D-methionine(in) + ADP + phosphate + H(+). Its function is as follows. Part of the ABC transporter complex MetNIQ involved in methionine import. Responsible for energy coupling to the transport system. This Staphylococcus epidermidis (strain ATCC 12228 / FDA PCI 1200) protein is Methionine import ATP-binding protein MetN 1.